Reading from the N-terminus, the 930-residue chain is Translation initiation factor IF-2 (930 aa).

The disordered stretch occupies residues 29-316 (GEFVKSASST…GRKSKRAKRA (288 aa)). The segment covering 81–120 (RPGPKPGPPVAQQPAAPAAPPAAPPAPPTPAAAPPSPAPA) has biased composition (pro residues). Residues 121–135 (APAAATPAEPAAPSA) show a composition bias toward low complexity. 2 stretches are compositionally biased toward pro residues: residues 136–155 (RPGP…PGAP) and 180–191 (PRPQGPGGPRPG). The segment covering 192 to 204 (PGAGGPRPGGGPR) has biased composition (gly residues). Over residues 228-240 (GGGPRPGGGPRPT) the composition is skewed to pro residues. A compositionally biased stretch (gly residues) spans 241-301 (PGGAGRPGGG…GAAGAFGRPG (61 aa)). Over residues 305 to 314 (KRGRKSKRAK) the composition is skewed to basic residues. The region spanning 426–598 (IRPPVVTVMG…VILTADASLD (173 aa)) is the tr-type G domain. Positions 435-442 (GHVDHGKT) are G1. 435–442 (GHVDHGKT) contributes to the GTP binding site. Positions 460–464 (GITQH) are G2. The interval 485 to 488 (DTPG) is G3. Residues 485–489 (DTPGH) and 539–542 (NKID) each bind GTP. Residues 539-542 (NKID) are G4. The segment at 575-577 (SAK) is G5.

This sequence belongs to the TRAFAC class translation factor GTPase superfamily. Classic translation factor GTPase family. IF-2 subfamily.

Its subcellular location is the cytoplasm. Functionally, one of the essential components for the initiation of protein synthesis. Protects formylmethionyl-tRNA from spontaneous hydrolysis and promotes its binding to the 30S ribosomal subunits. Also involved in the hydrolysis of GTP during the formation of the 70S ribosomal complex. This Mycolicibacterium vanbaalenii (strain DSM 7251 / JCM 13017 / BCRC 16820 / KCTC 9966 / NRRL B-24157 / PYR-1) (Mycobacterium vanbaalenii) protein is Translation initiation factor IF-2.